Reading from the N-terminus, the 743-residue chain is Phosphoribosylformylglycinamidine synthase subunit PurL (743 aa).

The active site involves histidine 50. ATP is bound by residues tyrosine 53 and lysine 92. Position 94 (glutamate 94) interacts with Mg(2+). Substrate contacts are provided by residues 95–98 (SHNH) and arginine 117. Catalysis depends on histidine 96, which acts as the Proton acceptor. A Mg(2+)-binding site is contributed by aspartate 118. Glutamine 241 contacts substrate. Aspartate 269 is a binding site for Mg(2+). Residue 313–315 (ESQ) participates in substrate binding. Residues aspartate 494 and glycine 531 each contribute to the ATP site. Residue asparagine 532 coordinates Mg(2+). A substrate-binding site is contributed by serine 534.

This sequence belongs to the FGAMS family. Monomer. Part of the FGAM synthase complex composed of 1 PurL, 1 PurQ and 2 PurS subunits.

The protein localises to the cytoplasm. The catalysed reaction is N(2)-formyl-N(1)-(5-phospho-beta-D-ribosyl)glycinamide + L-glutamine + ATP + H2O = 2-formamido-N(1)-(5-O-phospho-beta-D-ribosyl)acetamidine + L-glutamate + ADP + phosphate + H(+). It participates in purine metabolism; IMP biosynthesis via de novo pathway; 5-amino-1-(5-phospho-D-ribosyl)imidazole from N(2)-formyl-N(1)-(5-phospho-D-ribosyl)glycinamide: step 1/2. Its function is as follows. Part of the phosphoribosylformylglycinamidine synthase complex involved in the purines biosynthetic pathway. Catalyzes the ATP-dependent conversion of formylglycinamide ribonucleotide (FGAR) and glutamine to yield formylglycinamidine ribonucleotide (FGAM) and glutamate. The FGAM synthase complex is composed of three subunits. PurQ produces an ammonia molecule by converting glutamine to glutamate. PurL transfers the ammonia molecule to FGAR to form FGAM in an ATP-dependent manner. PurS interacts with PurQ and PurL and is thought to assist in the transfer of the ammonia molecule from PurQ to PurL. This Sinorhizobium fredii (strain HH103) protein is Phosphoribosylformylglycinamidine synthase subunit PurL.